A 199-amino-acid polypeptide reads, in one-letter code: MTKVKICGLSTKEAVETAVSAGADYIGFVFAPSKRQVTLEEAAELAKLIPADVKKVGVFVSPSRVELLEAIDKVGLDLVQVHGQVADDLFENLPCASIQAVQVDGNGHVPNSQADYLLFDAPVAGSGQPFDWGQLDTTGLAQPFFIAGGLNEDNVVKAIQHFTPYAVDVSSGVETDGQKDHEKIRRFIERVKNGISRTK.

This sequence belongs to the TrpF family.

The enzyme catalyses N-(5-phospho-beta-D-ribosyl)anthranilate = 1-(2-carboxyphenylamino)-1-deoxy-D-ribulose 5-phosphate. Its pathway is amino-acid biosynthesis; L-tryptophan biosynthesis; L-tryptophan from chorismate: step 3/5. In Streptococcus pneumoniae (strain ATCC BAA-255 / R6), this protein is N-(5'-phosphoribosyl)anthranilate isomerase.